Consider the following 138-residue polypeptide: Transcriptional activator protein Pur-alpha (138 aa).

Ser-70 bears the Phosphoserine mark.

It belongs to the PUR DNA-binding protein family. In terms of assembly, homodimer, heterodimer with PURB and heterotrimer with PURB and YBX1/Y-box protein 1. Interacts with FMR1; this interaction occurs in association with polyribosome.

It localises to the nucleus. Its function is as follows. This is a probable transcription activator that specifically binds the purine-rich single strand of the PUR element located upstream of the c-Myc gene. May play a role in the initiation of DNA replication and in recombination. The sequence is that of Transcriptional activator protein Pur-alpha from Rattus norvegicus (Rat).